Here is a 241-residue protein sequence, read N- to C-terminus: MAIIIPSRLSSTRLKQKPLQLIGSITLIERVFKQVNQAGLEHTYVATDSEEIASVITKVGGKVIFTDSAIPTGTDRTYEAFKLIPNNQNINYIVNVQGDMPFIEPSSILKIIEYLKNSKYDIVTPIVKVDRESVKASSNVTVVVDSAGTALYFSRSLIPNGAEEFLYHVGMYGFRKNALEKFVSLKPTFLEKTERLEQLRALENGMTIGTCLVENVPISVDTEEDLKKAVKFYENISKLGL.

It belongs to the KdsB family.

It localises to the cytoplasm. It catalyses the reaction 3-deoxy-alpha-D-manno-oct-2-ulosonate + CTP = CMP-3-deoxy-beta-D-manno-octulosonate + diphosphate. The protein operates within nucleotide-sugar biosynthesis; CMP-3-deoxy-D-manno-octulosonate biosynthesis; CMP-3-deoxy-D-manno-octulosonate from 3-deoxy-D-manno-octulosonate and CTP: step 1/1. It participates in bacterial outer membrane biogenesis; lipopolysaccharide biosynthesis. Its function is as follows. Activates KDO (a required 8-carbon sugar) for incorporation into bacterial lipopolysaccharide in Gram-negative bacteria. The polypeptide is 3-deoxy-manno-octulosonate cytidylyltransferase (Rickettsia rickettsii (strain Sheila Smith)).